Here is a 2327-residue protein sequence, read N- to C-terminus: MLQVVPGSLDTAPCAFPTENLPGRGFQSIPLDLSSSGAIASEVLLRSWAVVLRYYVGSDMIAFGRIDDTDPASQFAVCHGDIPATATLEELKASSLSGNPNSLPLSEWIASNTFNTIVWNGTSFPLEKLETTSCSLALLVSDTPSLAFASHAIGENVAAAVAEGVAHVADIITNQPQTTIGAVDLFGAVSWSQLQEWNSTVPNMIEVCMHDLIDTQAKSRPDSTALDCWDGSVSYAQLVDYTSRLGSFLVTQNVGPEVFVPVCFDKSLWAVVSMIGVMKAGGAFVCIDPAQPVDRLETIISEVNAQVALGAPAYREALAGLVPNAIAIDADFILSLPPSTELPRVLPKDAAFAIFTSGSTGKPKGIVHEHRTMCSSARRHAAALNINSTTRTFQFAAYTFIVNTFELFTPLVEGGCVCVPSKEDRLGRTTGAMRDLNANWACLTPSFLRSIKPEDVPQLKTLLLAGEPVQQDNLDTWRHRVKMLNMYGASEASICVAGDLSGPVGRSTIGVGAGCTTWVVDPIDHDRLAPLGAIGELVIEGPILAREYIHQPEKTAEVFISNTPWMEEIRGALPSRAYKTGDLVRYGTDGRINLVGRKDMQIKLRGQRVELEEVEFHLRQLIPRGTEVAVGLVKPVDQPDRPMLAIFASLTKAFGENFSPVNEDLAADIESRMAGWKDKLGDSVPGYMVPSTVVKLNHMPLTASGKTNRKAIGDFACTLTIAALTGAAKKEHKEPATATGKVLRGIWADVLSLKEESISSDDSFLQLGGNSIDAMKLVNLTRDVQLGLSVAKIFTYPVLDEMADACTKVIVQSFEDVPFGLITGKTDSLIQEAALQCQVGPLAIEDLYPCTAMQEGLMALSDSREGAYVAQHSLSLGPSIDLNRFKKACQKVVDAHPILRTCIVYPEQSRALQAVVQGEIEWHTAEDLETYAKEDKARPMCAGQLLTRYGLVPDGEGWTFVWTVHHAVYDAWTLELTFDRLDKAYKGHPLERDTTFKEFIQHMVTTDESESDNFWREYLAGATRNEFPSAVSTSKQPVADSSVKYSMSLIRTDGLSGITVASMIRAAWGILIGSHSESDDVVFGGIVSGRNAPIANADKLFGPGIAAVPVRVKFPDNDTLTIREFIGDVQDQSTKMISFEQAGLQNIRRVSSDATAACDFQTLLVVQPHKEKHLSTEEIDLRAASEADANFGTYALTLECSLKSDGVVCSAHYDSSLVSKESVERILGQLENLLHQMCSSSADKKLNELIFISSKDQESIRGWNRHIPKPIHKTIHQMIAERIAERPDHEAVCSWDGSLTYAELDQHASRLARRLAQLDVQPESFVPCCFEKSTWAIPAMLGVLRAGGAFLNLDPSQPANRIQLMIRKLKSKTIVCSPSQYDLCRSMGEEYNIVVFDTQSPEESLPDMPPVDVKPENAAYVIFTSGSTGEPKGTIIQHGHYAIGSVTHAPAMLIDGNTRALQFASFTFDASLVETITILITGGCICVASEEQRKRDVAEAVRATRANWAALTPSFVNLLSPDDVPSIKVLILAGEAMSQSHIDTWGKRLRLVNGYGPSECCVASTSTIDVVPGVSPRNIGFTCSGASWVVMPTNHHRLMPVGSVGELVLEGWNVGRGYLDEPAKTEAAFVENPLWMDLGDEMRAPVVYKTGDLVRYNADGSLDFQRRKDTQVKLRGQRVELGEIEYRITQSLPNKPHAVVDIVCPKDAPDQPRLVAFIQVPASEARRKPTSIFMLNQPESMIPEPNERHVSSLSGLEDRLSDFLPMHMIPSAYIPVYHIPKMPSGKADRKTLIRIGSGLTHRRMAEYSGATEDARPPTTDMQITMQELWGETLKMPAAQINLNDNFLRLGGDSITAMRLASAARAKGIPLSTATIFQHPTLEAISAVAETLSHQQRPQSFEPFSTLKSIPKDQLIDDIIIPQLGVPAFQIQDALESTDFQSLAINGGLNQTRGWSNYLIFDFEGPIDLRRLQVACEQLVAHHAVLRTVFLSTGSELIQVILRSVAPEYSIHIQDEEDPTESLIREDLARPPHLGEAIVRFMLVKDDATHHRLIMRISHAQYDGSSMPHLMHDLRVAYRGEELPKRAQFSDFVRTQLHTSDGSKSFYKDMLSGSQMTSVVSHTKSSVTNVLNTMLAEMVPLVAFKDHGITAATVVKAAWALVLADMAATADVVYGHMVSGRNLPLDGVESMMGPCLNIVPVRANMNSMHTILDLLRHIQQQQTDTIPHESLGFQQIIDQCTDWTPATRFSSVFQYQDFGGEEAAPGQPVSFESVLKCTPGFVCPAPDACDMSLLATPVARVDLPRRPSPAGDTRDGPTAASDSPSRAR.

Positions 214–605 (DTQAKSRPDS…GRKDMQIKLR (392 aa)) are adenylation 1. The region spanning 734-810 (EPATATGKVL…EMADACTKVI (77 aa)) is the Carrier 1 domain. S771 is subject to O-(pantetheine 4'-phosphoryl)serine. The tract at residues 845-1259 (EDLYPCTAMQ…IFISSKDQES (415 aa)) is condensation 1. Residues 1281–1675 (ERIAERPDHE…RRKDTQVKLR (395 aa)) are adenylation 2. One can recognise a Carrier 2 domain in the interval 1816–1892 (PPTTDMQITM…AISAVAETLS (77 aa)). S1853 is subject to O-(pantetheine 4'-phosphoryl)serine. The condensation 2 stretch occupies residues 1937 to 2260 (TDFQSLAING…VFQYQDFGGE (324 aa)). The interval 2299–2327 (RVDLPRRPSPAGDTRDGPTAASDSPSRAR) is disordered.

Belongs to the NRP synthetase family.

It catalyses the reaction N-benzoyl-L-phenylalaninol + benzoate + L-phenylalanine + 2 ATP = asperphenamate + 2 AMP + 2 diphosphate + H(+). Its pathway is secondary metabolite biosynthesis. In terms of biological role, nonribosomal peptide synthetase; part of the gene cluster that mediates the biosynthesis of asperphenamate, a rare linear amino acid ester that exhibits antitumor activity towards a number of cell lines. The structure of asperphenamate contains two subunits, N-benzoylphenylalanine and N-benzoylphenylalaninol, which are connected by an inter-molecular ester bond. The first step of asperphenamate biosynthesis is the generation of N-benzoylphenylalaninol by the nonribosomal peptide synthase apmA. Using phenylalanine and benzoic acid as substrates, apmA catalyzes amide bond formation and tethers the intermediate into the NRPS chain. Then, the terminal R domain of apmA catalyzes the reduction reaction to get the shunt product N-benzoylphenylalaninol. Subsequently, the nonribosomal peptide synthase apmB activates the same substrates as does apmA (phenylalanine and benzoic acid) to produce N-benzoylphenylalanine before condensing N-benzoylphenylalanine and N-benzoylphenylalaninol to release asperphenamate. The polypeptide is Nonribosomal peptide synthetase apmB (Penicillium brevicompactum).